The following is a 380-amino-acid chain: MAPNIRKSHPLLKMVNNSLIDLPAPSNISAWWNFGSLLGICLLTQILTGLLLAMHYTADTTLAFSSVAHTCRNVQYGWLIRNLHANGASFFFICIYLHIGRGFYYGSYLYKETWNTGVILLLTLMATAFVGYVLPWGQMSFWGATVITNLFSAIPYIGQTLVEWAWGGFSVDNPTLTRFFALHFLLPFMIAGLTLIHLTFLHESGSNNSLGIVSNCDKIPFHPYFTLKDILGFMLMLLPLTTLALFSPNLLGDPENFTPANPLVTPPHIKPEWYFLFAYAILRSIPNKLGGVLALAASVLVLFLAPFLHKAKQRAMTFRPLSQLLFWILVANLFILTWVGSQPVEHPFIIIGQLASITYFTILLILFPITGALENKMLNY.

The next 4 membrane-spanning stretches (helical) occupy residues F34–M54, W78–I99, W114–L134, and F179–T199. Residues H84 and H98 each coordinate heme b. Heme b is bound by residues H183 and H197. Residue H202 participates in a ubiquinone binding. 4 helical membrane-spanning segments follow: residues L227–S247, L289–H309, L321–S341, and F348–P368.

The protein belongs to the cytochrome b family. The cytochrome bc1 complex contains 11 subunits: 3 respiratory subunits (MT-CYB, CYC1 and UQCRFS1), 2 core proteins (UQCRC1 and UQCRC2) and 6 low-molecular weight proteins (UQCRH/QCR6, UQCRB/QCR7, UQCRQ/QCR8, UQCR10/QCR9, UQCR11/QCR10 and a cleavage product of UQCRFS1). This cytochrome bc1 complex then forms a dimer. Requires heme b as cofactor.

Its subcellular location is the mitochondrion inner membrane. Its function is as follows. Component of the ubiquinol-cytochrome c reductase complex (complex III or cytochrome b-c1 complex) that is part of the mitochondrial respiratory chain. The b-c1 complex mediates electron transfer from ubiquinol to cytochrome c. Contributes to the generation of a proton gradient across the mitochondrial membrane that is then used for ATP synthesis. This chain is Cytochrome b (MT-CYB), found in Ardenna tenuirostris (Short-tailed shearwater).